We begin with the raw amino-acid sequence, 271 residues long: Phosphatidylglycerol--prolipoprotein diacylglyceryl transferase (271 aa).

7 helical membrane passes run 18–38, 60–80, 103–123, 137–157, 181–201, 209–229, and 236–256; these read IFGL…LVAL, YFIW…ILIY, FVGI…IATY, LDLV…GNFL, PSQL…LLLI, GELI…CEFF, and IGFV…MFLL. Arg152 lines the a 1,2-diacyl-sn-glycero-3-phospho-(1'-sn-glycerol) pocket.

It belongs to the Lgt family.

It is found in the cell inner membrane. The enzyme catalyses L-cysteinyl-[prolipoprotein] + a 1,2-diacyl-sn-glycero-3-phospho-(1'-sn-glycerol) = an S-1,2-diacyl-sn-glyceryl-L-cysteinyl-[prolipoprotein] + sn-glycerol 1-phosphate + H(+). It participates in protein modification; lipoprotein biosynthesis (diacylglyceryl transfer). Its function is as follows. Catalyzes the transfer of the diacylglyceryl group from phosphatidylglycerol to the sulfhydryl group of the N-terminal cysteine of a prolipoprotein, the first step in the formation of mature lipoproteins. This is Phosphatidylglycerol--prolipoprotein diacylglyceryl transferase from Campylobacter lari (strain RM2100 / D67 / ATCC BAA-1060).